We begin with the raw amino-acid sequence, 66 residues long: U-scoloptoxin(24)-Er2a (66 aa).

The signal sequence occupies residues 1-23 (MVKPLHCLIGIVLFLAVLNAGNG). Residues 43-66 (SLFHGNQRKKRSEEKRFSDMEQTK) are disordered. Residues 53-66 (RSEEKRFSDMEQTK) are compositionally biased toward basic and acidic residues.

Belongs to the scoloptoxin-24 family. Expressed by the venom gland.

Its subcellular location is the secreted. This chain is U-scoloptoxin(24)-Er2a, found in Ethmostigmus rubripes (Giant centipede).